A 528-amino-acid polypeptide reads, in one-letter code: Glucose-6-phosphate isomerase (528 aa).

Glu322 acts as the Proton donor in catalysis. Residues His351 and Lys455 contribute to the active site.

The protein belongs to the GPI family.

Its subcellular location is the cytoplasm. It carries out the reaction alpha-D-glucose 6-phosphate = beta-D-fructose 6-phosphate. The protein operates within carbohydrate biosynthesis; gluconeogenesis. It participates in carbohydrate degradation; glycolysis; D-glyceraldehyde 3-phosphate and glycerone phosphate from D-glucose: step 2/4. In terms of biological role, catalyzes the reversible isomerization of glucose-6-phosphate to fructose-6-phosphate. The protein is Glucose-6-phosphate isomerase of Nostoc punctiforme (strain ATCC 29133 / PCC 73102).